The primary structure comprises 976 residues: Chloride channel protein 1 (976 aa).

Topologically, residues 1 to 118 (MQPSQSLRRG…VVRRKLGEDW (118 aa)) are cytoplasmic. The segment at 71–92 (DKEQDTGMSKKMGSSESMDSKD) is disordered. Residues 77–87 (GMSKKMGSSES) show a composition bias toward low complexity. A helical membrane pass occupies residues 119 to 150 (IFLVLLGLLMALVSWSMDYVSAKSLQAYKWSY). Over 151-158 (YQMQPNLP) the chain is Extracellular. Residues 159-179 (LQYLVWVTFPLTLILFSAVFC) form a helical membrane-spanning segment. Over 180 to 183 (HLIS) the chain is Cytoplasmic. Residues 184 to 189 (PQAVGS) constitute an intramembrane region (note=Loop between two helices). The short motif at 188-192 (GSGIP) is the Selectivity filter part_1 element. Serine 189 lines the chloride pocket. The helical intramembrane region spans 190 to 195 (GIPEMK). Topologically, residues 196–208 (TILRGVILKEYLT) are cytoplasmic. An intramembrane region (helical) is located at residues 209 to 224 (LKAFVAKVVALTAGLG). An intramembrane region (note=Loop between two helices) is located at residues 225–230 (SGIPVG). The short motif at 230–234 (GKEGP) is the Selectivity filter part_2 element. An intramembrane region (helical) is located at residues 231–246 (KEGPFVHIASICAAVL). Topologically, residues 247 to 268 (SKFMSMFCGVYEQPYYYTDMLT) are cytoplasmic. Intramembrane regions (helical) lie at residues 269–280 (VGCAVGVGCCFG) and 281–290 (TPLGGVLFSI). At 291 to 301 (EVTSTYFAVRN) the chain is on the cytoplasmic side. Residues 302 to 321 (YWRGFFAATFSAFVFRVLAV) form a helical membrane-spanning segment. The Extracellular portion of the chain corresponds to 322–347 (WNKDAVTITALFRTNFRMDFPFDLQE). A helical membrane pass occupies residues 348-376 (LPAFAIIGICCGFLGAVFVYLHRQVMLGV). Residues 377 to 390 (RKHKALSQFLAKHR) are Cytoplasmic-facing. Residues 391 to 408 (LLYPGIVTFIIASFTFPP) traverse the membrane as a helical segment. Topologically, residues 409-414 (GIGQFM) are extracellular. Positions 415–418 (AGEL) form an intramembrane region, note=Loop between two helices. Residues 419-426 (MPREAIST) constitute an intramembrane region (helical). Over 427–457 (LFDNNTWVKHVGDPESLGRSAVWIHPRVNVI) the chain is Extracellular. The segment at residues 458–475 (IIIFLFFIMKFWMSIVAT) is an intramembrane region (helical). The note=Loop between two helices intramembrane region spans 476–482 (TMPIPCG). The Selectivity filter part_3 signature appears at 482 to 486 (GGFMP). The segment at residues 483 to 498 (GFMPVFVLGAAFGRLV) is an intramembrane region (helical). Phenylalanine 484 is a binding site for chloride. Topologically, residues 499-521 (GEIMAMLFPDGILFDDIIYKILP) are extracellular. An intramembrane region (helical) is located at residues 522-538 (GGYAVIGAAALTGAVSH). The note=Loop between two helices intramembrane region spans 539–540 (TV). An intramembrane region (helical) is located at residues 541 to 554 (STAVICFELTGQIA). Topologically, residues 555 to 557 (HIL) are extracellular. The helical intramembrane region spans 558-571 (PMMVAVILANMVAQ). Positions 572–575 (SLQP) form an intramembrane region, note=Loop between two helices. Residues 576–578 (SLY) constitute an intramembrane region (helical). Tyrosine 578 serves as a coordination point for chloride. Over 579-976 (DSIIQVKKLP…DEEDEDELIL (398 aa)) the chain is Cytoplasmic. The CBS 1 domain maps to 609–668 (MVRDVKFVSATCTYGELRTLLQTTTVKTLPLVDSKDSMILLGSVERSELQSLLQRHLGPE). Positions 707 to 759 (DEDEDEDLSGKPELPPLPPPHPLPSAPLSSEESNGPLPSHKQQPEAPEPADQR) are disordered. The span at 719-731 (ELPPLPPPHPLPS) shows a compositional bias: pro residues. One can recognise a CBS 2 domain in the interval 816-871 (IDQSPFQLVEQTSLHKTHTLFSLLGLHLAYVTSMGKLRGVLALEELQKAIEGHTKS). Residues 872 to 976 (GVQLRPPLAS…DEEDEDELIL (105 aa)) form a disordered region. A Phosphoserine modification is found at serine 881. Pro residues predominate over residues 914 to 925 (SPEPPAPSPSPA). Composition is skewed to acidic residues over residues 938 to 955 (ELEE…EELA) and 967 to 976 (DEEDEDELIL).

Belongs to the chloride channel (TC 2.A.49) family. ClC-1/CLCN1 subfamily. As to quaternary structure, homodimer.

It is found in the cell membrane. The protein resides in the sarcolemma. It localises to the T-tubule. It carries out the reaction chloride(in) = chloride(out). It catalyses the reaction thiocyanate(in) = thiocyanate(out). The catalysed reaction is bromide(in) = bromide(out). The enzyme catalyses nitrate(in) = nitrate(out). It carries out the reaction iodide(out) = iodide(in). Modulated by membrane voltage with depolarization favouring channel opening and hyperpolarization favouring channel closure. Inhibited by acidic pH and ATP binding due to a shift of voltage dependence of common gating to more positive voltages. Inhibited by 9-anthracene-carboxylic. Voltage-gated chloride channel involved in skeletal muscle excitability. Generates most of the plasma membrane chloride conductance in skeletal muscle fibers, stabilizes the resting membrane potential and contributes to the repolarization phase during action potential firing. Forms a homodimeric channel where each subunit has its own ion conduction pathway. Conducts double-barreled currents controlled by two types of gates, two fast glutamate gates that control each subunit independently and a slow common gate that opens and shuts off both subunits simultaneously. Has a significant open probability at muscle resting potential and is further activated upon membrane depolarization. Permeable to small monovalent anions with ion selectivity for chloride &gt; thiocyanate &gt; bromide &gt; nitrate &gt; iodide. The polypeptide is Chloride channel protein 1 (CLCN1) (Canis lupus familiaris (Dog)).